A 770-amino-acid polypeptide reads, in one-letter code: DNA ligase 1 (770 aa).

Residues 1-18 are compositionally biased toward low complexity; sequence MSTGEGTAEQTATGTPAQ. The interval 1–27 is disordered; it reads MSTGEGTAEQTATGTPAQNGRESIPSD. Residues 57–61, 106–107, and E142 contribute to the NAD(+) site; these read DAEFD and SL. The active-site N6-AMP-lysine intermediate is K144. The NAD(+) site is built by R165, E202, K318, and K342. Positions 439, 442, 458, and 464 each coordinate Zn(2+). In terms of domain architecture, BRCT spans 657 to 746; it reads STPRTLEGLT…PAAVGDAAEA (90 aa). Residues 741 to 770 are disordered; it reads GDAAEADGGDAPEESAALQEEKAAAVEETA. Over residues 744 to 753 the composition is skewed to acidic residues; it reads AEADGGDAPE. A compositionally biased stretch (basic and acidic residues) spans 759–770; that stretch reads QEEKAAAVEETA.

The protein belongs to the NAD-dependent DNA ligase family. LigA subfamily. It depends on Mg(2+) as a cofactor. Mn(2+) is required as a cofactor.

It catalyses the reaction NAD(+) + (deoxyribonucleotide)n-3'-hydroxyl + 5'-phospho-(deoxyribonucleotide)m = (deoxyribonucleotide)n+m + AMP + beta-nicotinamide D-nucleotide.. DNA ligase that catalyzes the formation of phosphodiester linkages between 5'-phosphoryl and 3'-hydroxyl groups in double-stranded DNA using NAD as a coenzyme and as the energy source for the reaction. It is essential for DNA replication and repair of damaged DNA. In Pseudarthrobacter chlorophenolicus (strain ATCC 700700 / DSM 12829 / CIP 107037 / JCM 12360 / KCTC 9906 / NCIMB 13794 / A6) (Arthrobacter chlorophenolicus), this protein is DNA ligase 1.